The chain runs to 365 residues: Putative glycosyltransferase C06E1.7 (365 aa).

It belongs to the glycosyltransferase 11 family.

The chain is Putative glycosyltransferase C06E1.7 from Caenorhabditis elegans.